Consider the following 41-residue polypeptide: Large ribosomal subunit protein bL36 (41 aa).

It belongs to the bacterial ribosomal protein bL36 family.

In Rickettsia africae (strain ESF-5), this protein is Large ribosomal subunit protein bL36.